The following is a 474-amino-acid chain: Glutathione synthetase (474 aa).

N-acetylalanine is present on alanine 2. Arginine 125 is a substrate binding site. Glutamate 144 contributes to the ATP binding site. Mg(2+) contacts are provided by glutamate 144 and asparagine 146. Substrate-binding positions include 148 to 151 (ISAS), 214 to 216 (ERN), glutamine 220, and 267 to 270 (RDGY). Residues lysine 305, 364–373 (KPQREGGGNN), tyrosine 375, and 398–401 (MEKI) contribute to the ATP site. Glutamate 368 is a binding site for Mg(2+). Residue serine 415 is modified to Phosphoserine. Glutamate 425 contacts ATP. Arginine 450 contributes to the substrate binding site. Residues lysine 452 and aspartate 458 each coordinate ATP. 461–462 (VA) is a substrate binding site.

It belongs to the eukaryotic GSH synthase family. As to quaternary structure, homodimer. The cofactor is Mg(2+).

It catalyses the reaction gamma-L-glutamyl-L-cysteine + glycine + ATP = glutathione + ADP + phosphate + H(+). The enzyme catalyses gamma-L-glutamyl-(2S)-2-aminobutanoate + glycine + ATP = ophthalmate + ADP + phosphate + H(+). It functions in the pathway sulfur metabolism; glutathione biosynthesis; glutathione from L-cysteine and L-glutamate: step 2/2. Catalyzes the production of glutathione from gamma-glutamylcysteine and glycine in an ATP-dependent manner. Glutathione (gamma-glutamylcysteinylglycine, GSH) is the most abundant intracellular thiol in living aerobic cells and is required for numerous processes including the protection of cells against oxidative damage, amino acid transport, the detoxification of foreign compounds, the maintenance of protein sulfhydryl groups in a reduced state and acts as a cofactor for a number of enzymes. Participates in ophthalmate biosynthesis in hepatocytes. The chain is Glutathione synthetase from Mus musculus (Mouse).